Reading from the N-terminus, the 260-residue chain is Hydroxyethylthiazole kinase 1 (260 aa).

M39 provides a ligand contact to substrate. R115 and T160 together coordinate ATP. G187 provides a ligand contact to substrate.

The protein belongs to the Thz kinase family. Mg(2+) is required as a cofactor.

It carries out the reaction 5-(2-hydroxyethyl)-4-methylthiazole + ATP = 4-methyl-5-(2-phosphooxyethyl)-thiazole + ADP + H(+). Its pathway is cofactor biosynthesis; thiamine diphosphate biosynthesis; 4-methyl-5-(2-phosphoethyl)-thiazole from 5-(2-hydroxyethyl)-4-methylthiazole: step 1/1. In terms of biological role, catalyzes the phosphorylation of the hydroxyl group of 4-methyl-5-beta-hydroxyethylthiazole (THZ). The sequence is that of Hydroxyethylthiazole kinase 1 from Streptococcus pneumoniae (strain P1031).